We begin with the raw amino-acid sequence, 195 residues long: Imidazoleglycerol-phosphate dehydratase (195 aa).

It belongs to the imidazoleglycerol-phosphate dehydratase family.

Its subcellular location is the cytoplasm. It carries out the reaction D-erythro-1-(imidazol-4-yl)glycerol 3-phosphate = 3-(imidazol-4-yl)-2-oxopropyl phosphate + H2O. It participates in amino-acid biosynthesis; L-histidine biosynthesis; L-histidine from 5-phospho-alpha-D-ribose 1-diphosphate: step 6/9. This is Imidazoleglycerol-phosphate dehydratase from Methylorubrum populi (strain ATCC BAA-705 / NCIMB 13946 / BJ001) (Methylobacterium populi).